Here is a 62-residue protein sequence, read N- to C-terminus: Mu-elapitoxin-Na1a (62 aa).

Disulfide bonds link cysteine 3–cysteine 22, cysteine 15–cysteine 40, cysteine 44–cysteine 55, and cysteine 56–cysteine 61.

It belongs to the three-finger toxin family. Short-chain subfamily. Orphan group XV sub-subfamily. In terms of tissue distribution, expressed by the venom gland.

Its subcellular location is the secreted. Its function is as follows. Potent inhibitor of human Nav1.8/SCN10A (IC(50)=141-380 nM). Is highly selective for this channel and acts in a reversible manner. Shows a depolarizing shift of activation and hyperpolarizing shift of inactivation. In contrast to the very similar cytotoxin A5 (AC P62375), does not seem to bind integrin alpha-V/beta-3, since it does not promote or inhibit the proliferation of HUVECs and C-PAE cells. In vivo, in rodent models of inflammatory and neuropathic pain, it alleviates nociceptive behaviors more potently than does morphine. It displays no evident cytotoxic, hemolytic and cardiotoxic activities and produces no obvious adverse responses in mice even at a dose 30-fold higher than that producing a significant analgesic effect. The polypeptide is Mu-elapitoxin-Na1a (Naja atra (Chinese cobra)).